The chain runs to 219 residues: Ribose-5-phosphate isomerase A (219 aa).

Substrate-binding positions include Thr28–Thr31, Asp81–Asp84, and Lys94–Gly97. Glu103 functions as the Proton acceptor in the catalytic mechanism. Residue Lys121 coordinates substrate.

It belongs to the ribose 5-phosphate isomerase family. As to quaternary structure, homodimer.

The catalysed reaction is aldehydo-D-ribose 5-phosphate = D-ribulose 5-phosphate. It participates in carbohydrate degradation; pentose phosphate pathway; D-ribose 5-phosphate from D-ribulose 5-phosphate (non-oxidative stage): step 1/1. Its function is as follows. Catalyzes the reversible conversion of ribose-5-phosphate to ribulose 5-phosphate. This is Ribose-5-phosphate isomerase A from Shewanella frigidimarina (strain NCIMB 400).